A 724-amino-acid polypeptide reads, in one-letter code: uncharacterized protein (724 aa).

Disordered stretches follow at residues 97–131 (RKSF…YPSP), 187–252 (ETKI…FETE), 309–434 (FETE…TSKL), and 454–473 (RGVE…VAEK). Positions 115–128 (TRSASYSESNNSFY) are enriched in polar residues. Residues 187–217 (ETKIGIEEENEESEILAEEKEEEDNDFSVLE) are a coiled coil. A compositionally biased stretch (acidic residues) spans 193–212 (EEENEESEILAEEKEEEDND). Composition is skewed to basic and acidic residues over residues 223-252 (QEIK…FETE) and 309-322 (FETE…DHSE). Composition is skewed to low complexity over residues 323-333 (TTTSETDSTES) and 347-366 (SPQT…SLRS). Residues 367-388 (QPPPPPPSPEHKAPAPPPPPPM) show a composition bias toward pro residues. Over residues 400 to 410 (FSKTHSTNGDN) the composition is skewed to polar residues. 2 coiled-coil regions span residues 495–522 (SYFQ…HSFQ) and 649–678 (MELA…RAKR).

This is an uncharacterized protein from Arabidopsis thaliana (Mouse-ear cress).